A 102-amino-acid polypeptide reads, in one-letter code: Peptide chaperone MftB (102 aa).

The protein belongs to the peptide chaperone MftB family.

Peptide chaperone involved in the biosynthesis of the enzyme cofactor mycofactocin (MFT). Binds MftA and MftC with high affinity, and is essential for MftC activity on MftA, likely via the formation of a ternary complex. Is required for the in vivo ethanol assimilation in M.smegmatis. The protein is Peptide chaperone MftB of Mycolicibacterium smegmatis (strain ATCC 700084 / mc(2)155) (Mycobacterium smegmatis).